A 715-amino-acid polypeptide reads, in one-letter code: Putative macrophage stimulating 1-like protein (715 aa).

The first 20 residues, 1-20, serve as a signal peptide directing secretion; it reads MAPAPVTLLAPGAASSMSCS. Positions 21 to 110 constitute a PAN domain; that stretch reads QPGQRSPSND…GRCDLFQEKG (90 aa). Kringle domains lie at 63–156, 160–238, 252–345, and 353–464; these read GRCG…IKSC, ACVW…LPRC, SCFR…IRRC, and DCYH…LRRC. 12 cysteine pairs are disulfide-bonded: C127–C151, C161–C238, C182–C221, C210–C233, C253–C345, C316–C339, C354–C464, C375–C447, C511–C527, C606–C671, C636–C650, and C661–C689. The region spanning 488-713 is the Peptidase S1 domain; sequence VAGGHPGNSP…FVDWIHKVMR (226 aa).

It belongs to the peptidase S1 family. Plasminogen subfamily.

The protein localises to the secreted. This Homo sapiens (Human) protein is Putative macrophage stimulating 1-like protein (MST1L).